A 360-amino-acid polypeptide reads, in one-letter code: Geranylgeranyl pyrophosphate synthase 3, chloroplastic (360 aa).

Residues 1-39 (MATTVHLSSFSLFIQSRGRRDNSISSVKSLKKRTGLSPS) constitute a chloroplast transit peptide. A disordered region spans residues 24 to 54 (ISSVKSLKKRTGLSPSSALTSQGGRDMIPPE). The segment covering 36–46 (LSPSSALTSQG) has biased composition (polar residues). Residues Lys-106, Arg-109, and His-138 each contribute to the isopentenyl diphosphate site. Residues Asp-145 and Asp-151 each contribute to the Mg(2+) site. Arg-156 lines the dimethylallyl diphosphate pocket. Residue Arg-157 coordinates isopentenyl diphosphate. Positions 245, 246, 283, 300, and 310 each coordinate dimethylallyl diphosphate.

The protein belongs to the FPP/GGPP synthase family. As to quaternary structure, monomer. Mg(2+) serves as cofactor. As to expression, mainly expressed in roots.

It localises to the plastid. Its subcellular location is the chloroplast. The catalysed reaction is isopentenyl diphosphate + dimethylallyl diphosphate = (2E)-geranyl diphosphate + diphosphate. It carries out the reaction isopentenyl diphosphate + (2E)-geranyl diphosphate = (2E,6E)-farnesyl diphosphate + diphosphate. The enzyme catalyses isopentenyl diphosphate + (2E,6E)-farnesyl diphosphate = (2E,6E,10E)-geranylgeranyl diphosphate + diphosphate. It functions in the pathway isoprenoid biosynthesis; farnesyl diphosphate biosynthesis; farnesyl diphosphate from geranyl diphosphate and isopentenyl diphosphate: step 1/1. It participates in isoprenoid biosynthesis; geranyl diphosphate biosynthesis; geranyl diphosphate from dimethylallyl diphosphate and isopentenyl diphosphate: step 1/1. The protein operates within isoprenoid biosynthesis; geranylgeranyl diphosphate biosynthesis; geranylgeranyl diphosphate from farnesyl diphosphate and isopentenyl diphosphate: step 1/1. Catalyzes the trans-addition of the three molecules of IPP onto DMAPP to form geranylgeranyl pyrophosphate. In Arabidopsis thaliana (Mouse-ear cress), this protein is Geranylgeranyl pyrophosphate synthase 3, chloroplastic (GGPP3).